Here is a 186-residue protein sequence, read N- to C-terminus: ADP-ribosylation factor-like protein 8A (186 aa).

Residues 1-19 (MLALFNKLLDWFKALFWKE) constitute an intramembrane region (note=Mediates targeting to membranes). Residues 29–35 (QYSGKTT), 71–75 (DIGGQ), and 130–133 (NKRD) contribute to the GTP site.

It belongs to the small GTPase superfamily. Arf family.

It is found in the late endosome membrane. The protein localises to the lysosome membrane. Functionally, may play a role in lysosomes motility. Alternatively, may play a role in chromosome segregation. The chain is ADP-ribosylation factor-like protein 8A (arl8a) from Xenopus tropicalis (Western clawed frog).